The sequence spans 163 residues: Probable chemoreceptor glutamine deamidase CheD (163 aa).

It belongs to the CheD family.

The enzyme catalyses L-glutaminyl-[protein] + H2O = L-glutamyl-[protein] + NH4(+). Functionally, probably deamidates glutamine residues to glutamate on methyl-accepting chemotaxis receptors (MCPs), playing an important role in chemotaxis. The polypeptide is Probable chemoreceptor glutamine deamidase CheD (Borrelia garinii subsp. bavariensis (strain ATCC BAA-2496 / DSM 23469 / PBi) (Borreliella bavariensis)).